A 193-amino-acid polypeptide reads, in one-letter code: MKKMLFVVAAVFLLAGCPSMLPQQPPAPVEPVTPTEPTEPPKPIEPPIEVVPTPPKITSINWNAAIQPLIREMSVTDDLATGKLLVVDNVKNNSGGNIQAVNATNTIIDSVNSISALQTVPYAQMMSARKALGLSGEDSLGLRSAAIGLARYLQADYILFSTVDGKKDNRVISMQLMSVASGEILWSGRHKVE.

The N-terminal stretch at 1–16 (MKKMLFVVAAVFLLAG) is a signal peptide. A lipid anchor (N-palmitoyl cysteine) is attached at C17. C17 carries the S-diacylglycerol cysteine lipid modification. The tract at residues 23–50 (QQPPAPVEPVTPTEPTEPPKPIEPPIEV) is disordered. Residues 37 to 46 (PTEPPKPIEP) show a composition bias toward pro residues.

The protein belongs to the LpoB family. In terms of assembly, interacts with PBP1b.

It localises to the cell outer membrane. Its function is as follows. Regulator of peptidoglycan synthesis that is essential for the function of penicillin-binding protein 1B (PBP1b). This Proteus mirabilis (strain HI4320) protein is Penicillin-binding protein activator LpoB.